A 224-amino-acid chain; its full sequence is CRIB domain-containing protein RIC1 (224 aa).

Positions 29-42 (IGFPTDVKHVAHIG) constitute a CRIB domain. The interval 38–224 (VAHIGSDGPT…SVDTTCNDII (187 aa)) is disordered. Composition is skewed to polar residues over residues 69–84 (SRGNSNKYNPQGTNQR), 114–132 (PNHNGSPPRKSSGNAASSD), 144–155 (AHGSTDSSNDQE), and 215–224 (SVDTTCNDII).

As to quaternary structure, interacts with ARAC11/ROP1. Expressed in columella cells from the root tip and epidermal cells at the base of lateral roots, leaves, stems, flowers, anthers, pollen and siliques.

It is found in the cytoplasm. The protein localises to the cytoskeleton. In terms of biological role, functions as a downstream effector of Rho-related GTP binding proteins of the 'Rho of Plants' (ROPs) family. Participates in the propagation of ROP GTPase signals in specific cellular responses. Required for cortical microtubule organization. Promotes microtubule bundling and formation of well-ordered microtubule arrays in the neck region of pavement cells. This restricts cell lateral expansion to generate the narrow neck morphology of pavement cells. Its function is inhibited when it interacts with activated ARAC4/ROP2. Represses ARAC4/ROP2 activation and antagonizes the RIC4-actin pathway that promotes the assembly of cortical actin microfilaments. Acts as a downstream effector of ARAC3/ROP6 which functions in a signaling pathway that negatively regulates clathrin-mediated endocytosis and internalization of PIN1 and PIN2. Required for the asymmetric auxin distribution during root gravitropism and vascular patterning. Positively regulates auxin responses, but negatively regulates ABA responses during lateral root development and primary root elongation. This is CRIB domain-containing protein RIC1 (RIC1) from Arabidopsis thaliana (Mouse-ear cress).